The following is a 149-amino-acid chain: Ribonuclease pancreatic (149 aa).

The first 25 residues, 1–25 (MGLEKSLMLFPLFVLLLGWVQPSLG), serve as a signal peptide directing secretion. Residues 30–49 (AQKFQRQHMDPAGSSSNSPT) are disordered. Residues Lys32 and Arg35 each coordinate substrate. His37 serves as the catalytic Proton acceptor. Disulfide bonds link Cys51–Cys109, Cys65–Cys120, Cys83–Cys135, and Cys90–Cys97. Substrate is bound at residue 66–70 (KPVNT). A glycan (N-linked (GlcNAc...) asparagine) is linked at Asn87. Lys91 contacts substrate. The active-site Proton donor is His144.

Belongs to the pancreatic ribonuclease family. In terms of assembly, monomer. Interacts with and forms tight 1:1 complexes with RNH1. Dimerization of two such complexes may occur. Interaction with RNH1 inhibits this protein. Pancreas.

The protein localises to the secreted. It catalyses the reaction an [RNA] containing cytidine + H2O = an [RNA]-3'-cytidine-3'-phosphate + a 5'-hydroxy-ribonucleotide-3'-[RNA].. The catalysed reaction is an [RNA] containing uridine + H2O = an [RNA]-3'-uridine-3'-phosphate + a 5'-hydroxy-ribonucleotide-3'-[RNA].. Endonuclease that catalyzes the cleavage of RNA on the 3' side of pyrimidine nucleotides. Acts on single-stranded and double-stranded RNA. The chain is Ribonuclease pancreatic (Rnase1) from Mus saxicola (Brown spiny mouse).